The following is a 355-amino-acid chain: Uroporphyrinogen decarboxylase (355 aa).

Substrate-binding positions include 27-31 (RQAGR), Asp78, Tyr155, Ser210, and His328.

This sequence belongs to the uroporphyrinogen decarboxylase family. In terms of assembly, homodimer.

It localises to the cytoplasm. The enzyme catalyses uroporphyrinogen III + 4 H(+) = coproporphyrinogen III + 4 CO2. The protein operates within porphyrin-containing compound metabolism; protoporphyrin-IX biosynthesis; coproporphyrinogen-III from 5-aminolevulinate: step 4/4. Its function is as follows. Catalyzes the decarboxylation of four acetate groups of uroporphyrinogen-III to yield coproporphyrinogen-III. This chain is Uroporphyrinogen decarboxylase, found in Pseudomonas fluorescens (strain ATCC BAA-477 / NRRL B-23932 / Pf-5).